Reading from the N-terminus, the 543-residue chain is CTP synthase (543 aa).

Residues 1–266 form an amidoligase domain region; sequence MTKFIFVTGG…DDIICERFGI (266 aa). Residue Ser13 coordinates CTP. Ser13 contacts UTP. Residues 14-19 and Asp71 contribute to the ATP site; that span reads SLGKGI. Mg(2+) contacts are provided by Asp71 and Glu140. CTP is bound by residues 147-149, 187-192, and Lys223; these read DIE and KTKPTQ. Residues 187–192 and Lys223 each bind UTP; that span reads KTKPTQ. In terms of domain architecture, Glutamine amidotransferase type-1 spans 291-543; the sequence is TVAIVGKYVE…VKAAIDHQNI (253 aa). An L-glutamine-binding site is contributed by Gly354. The active-site Nucleophile; for glutamine hydrolysis is the Cys381. L-glutamine contacts are provided by residues 382–385, Glu404, and Arg471; that span reads LGMQ. Catalysis depends on residues His516 and Glu518.

Belongs to the CTP synthase family. In terms of assembly, homotetramer.

It carries out the reaction UTP + L-glutamine + ATP + H2O = CTP + L-glutamate + ADP + phosphate + 2 H(+). It catalyses the reaction L-glutamine + H2O = L-glutamate + NH4(+). The catalysed reaction is UTP + NH4(+) + ATP = CTP + ADP + phosphate + 2 H(+). The protein operates within pyrimidine metabolism; CTP biosynthesis via de novo pathway; CTP from UDP: step 2/2. With respect to regulation, allosterically activated by GTP, when glutamine is the substrate; GTP has no effect on the reaction when ammonia is the substrate. The allosteric effector GTP functions by stabilizing the protein conformation that binds the tetrahedral intermediate(s) formed during glutamine hydrolysis. Inhibited by the product CTP, via allosteric rather than competitive inhibition. Its function is as follows. Catalyzes the ATP-dependent amination of UTP to CTP with either L-glutamine or ammonia as the source of nitrogen. Regulates intracellular CTP levels through interactions with the four ribonucleotide triphosphates. This is CTP synthase from Psychrobacter sp. (strain PRwf-1).